We begin with the raw amino-acid sequence, 513 residues long: MNKRDKALQLIKELEDNQDRPISPNLKENLENLTLLTEGCSDIVFRQFDFGNGLCGFIVYIEGIVKSEHIQDHALRPFLMHLTDQIDEHEEALQNTLSISSVALETSMSKVAASIIEGNAVLFADGHSKGLILNIKGGQRRSIEEPITESTIRGSREGFTESLRVNTALVRFRVKTFQLKMISFKIGTKTKTDVVLAYIDGLADPKVIDKAKKRIKKIKIDAVLESGYIEEFIEDDTYSPFPQLQYTERPDTVAAQLLEGRFAIFTDNTPFVLTGPITFWQLMQASEDYYERYLMSNLIRWLRYMFLFVALYLPAIYVAVITYHQDLMPTNLMFSVASAREPIPFPAIIEALIMEISFEALREAGVRLPKTIGQTVSILGALVIGTAAVEAGIVSAPMVIIVSLTGIASFTIPRFNLAISIRMLRFPLMFLASIFGIFGIMLGTIILVLHLCKLQSFGIPYLSGISPFKRDEVKDIFVRAPWWTMTRRPGTYSRGNGQKGAKREDPKDEENNI.

Helical transmembrane passes span 262–282 (FAIF…FWQL), 304–324 (YMFL…ITYH), 341–361 (EPIP…FEAL), 382–402 (LVIG…VIIV), and 429–449 (MFLA…ILVL). The disordered stretch occupies residues 489-513 (PGTYSRGNGQKGAKREDPKDEENNI). Residues 501 to 513 (AKREDPKDEENNI) show a composition bias toward basic and acidic residues.

Belongs to the GerABKA family.

The protein resides in the cell membrane. This is an uncharacterized protein from Bacillus subtilis (strain 168).